A 718-amino-acid polypeptide reads, in one-letter code: Ribosomal RNA large subunit methyltransferase K/L (718 aa).

Residues Thr43–Leu154 enclose the THUMP domain.

The protein belongs to the methyltransferase superfamily. RlmKL family.

It localises to the cytoplasm. It catalyses the reaction guanosine(2445) in 23S rRNA + S-adenosyl-L-methionine = N(2)-methylguanosine(2445) in 23S rRNA + S-adenosyl-L-homocysteine + H(+). It carries out the reaction guanosine(2069) in 23S rRNA + S-adenosyl-L-methionine = N(2)-methylguanosine(2069) in 23S rRNA + S-adenosyl-L-homocysteine + H(+). In terms of biological role, specifically methylates the guanine in position 2445 (m2G2445) and the guanine in position 2069 (m7G2069) of 23S rRNA. This chain is Ribosomal RNA large subunit methyltransferase K/L, found in Histophilus somni (strain 2336) (Haemophilus somnus).